A 1157-amino-acid chain; its full sequence is ATP-dependent helicase/deoxyribonuclease subunit B (1157 aa).

The UvrD-like helicase ATP-binding domain maps to 1-277 (MTLQIIAGKA…KILLENKRAN (277 aa)). ATP is bound at residue 8–15 (GKAGTGKT). Positions 271–590 (LENKRANSDS…VLADMENAKL (320 aa)) constitute a UvrD-like helicase C-terminal domain. Positions 794, 1115, 1118, and 1124 each coordinate [4Fe-4S] cluster.

The protein belongs to the helicase family. AddB/RexB type 1 subfamily. In terms of assembly, heterodimer of AddA and AddB. Mg(2+) is required as a cofactor. Requires [4Fe-4S] cluster as cofactor.

Functionally, the heterodimer acts as both an ATP-dependent DNA helicase and an ATP-dependent, dual-direction single-stranded exonuclease. Recognizes the chi site generating a DNA molecule suitable for the initiation of homologous recombination. The AddB subunit has 5' -&gt; 3' nuclease activity but not helicase activity. The protein is ATP-dependent helicase/deoxyribonuclease subunit B of Listeria innocua serovar 6a (strain ATCC BAA-680 / CLIP 11262).